A 1344-amino-acid polypeptide reads, in one-letter code: Myb-binding protein 1A (1344 aa).

The segment at 1–24 is disordered; the sequence is MAEMKSPTKAEPATPAEAAQSDRH. The residue at position 2 (alanine 2) is an N-acetylalanine. The interval 2–580 is interaction with MYB; the sequence is AEMKSPTKAE…WDQMMSTLKE (579 aa). Residues 7–19 show a composition bias toward low complexity; sequence PTKAEPATPAEAA. 2 positions are modified to N6-acetyllysine: lysine 69 and lysine 156. 2 short sequence motifs (nuclear export signal) span residues 238-256 and 261-279; these read SEDN…ANSV and KLPN…ESRF. Disordered stretches follow at residues 710-751 and 1146-1344; these read DEKQ…DKDV and QRPK…VQTP. Positions 732 to 747 are enriched in acidic residues; it reads SDMDSEDGEESEEEDR. Residues 1148–1159 show a composition bias toward basic and acidic residues; sequence PKSEKKNAKDIP. Lysine 1149 participates in a covalent cross-link: Glycyl lysine isopeptide (Lys-Gly) (interchain with G-Cter in SUMO2). The tract at residues 1152–1344 is required for nuclear and nucleolar localization; the sequence is KKNAKDIPSD…RVASRRVQTP (193 aa). Residues serine 1160 and serine 1164 each carry the phosphoserine modification. The segment covering 1168 to 1185 has biased composition (basic residues); sequence TKRKKKGFLPETKKRKKL. At serine 1187 the chain carries Phosphoserine. Residues 1188 to 1202 are compositionally biased toward polar residues; it reads EGTTPEKNAASQQDA. The residue at position 1191 (threonine 1191) is a Phosphothreonine. 2 positions are modified to phosphoserine: serine 1219 and serine 1244. The segment covering 1249-1258 has biased composition (polar residues); that stretch reads NPTLSPSTPA. A Phosphothreonine modification is found at threonine 1251. Serine 1253 is modified (phosphoserine). 2 positions are modified to phosphothreonine: threonine 1256 and threonine 1277. Serine 1280, serine 1303, and serine 1318 each carry phosphoserine. Residues 1317 to 1329 are compositionally biased toward low complexity; that stretch reads LSLVSRSPSLLQS. Citrulline is present on arginine 1322. Serine 1323, serine 1325, and serine 1329 each carry phosphoserine.

The protein belongs to the MYBBP1A family. Component of the B-WICH complex, at least composed of SMARCA5/SNF2H, BAZ1B/WSTF, SF3B1, DEK, MYO1C, ERCC6, MYBBP1A and DDX21. Binds to and represses JUN and MYB via the leucine zipper regions present in these proteins. Also binds to and represses PPARGC1A: this interaction is abrogated when PPARGC1A is phosphorylated by MAPK1/ERK. Binds to and stimulates transcription by AHR. Binds to KPNA2. Interacts with CLOCK and CRY1. Citrullinated by PADI4. In terms of tissue distribution, ubiquitously expressed.

Its subcellular location is the nucleus. It localises to the nucleolus. It is found in the cytoplasm. Functionally, may activate or repress transcription via interactions with sequence specific DNA-binding proteins. Repression may be mediated at least in part by histone deacetylase activity (HDAC activity). Acts as a corepressor and in concert with CRY1, represses the transcription of the core circadian clock component PER2. Preferentially binds to dimethylated histone H3 'Lys-9' (H3K9me2) on the PER2 promoter. Has a role in rRNA biogenesis together with PWP1. The polypeptide is Myb-binding protein 1A (Mybbp1a) (Mus musculus (Mouse)).